Here is a 489-residue protein sequence, read N- to C-terminus: Glycogen synthase (489 aa).

ADP-alpha-D-glucose is bound at residue lysine 18.

It belongs to the glycosyltransferase 1 family. Bacterial/plant glycogen synthase subfamily.

The enzyme catalyses [(1-&gt;4)-alpha-D-glucosyl](n) + ADP-alpha-D-glucose = [(1-&gt;4)-alpha-D-glucosyl](n+1) + ADP + H(+). The protein operates within glycan biosynthesis; glycogen biosynthesis. Functionally, synthesizes alpha-1,4-glucan chains using ADP-glucose. This chain is Glycogen synthase, found in Rhodopseudomonas palustris (strain BisB18).